The chain runs to 585 residues: Glutathione S-transferase C-terminal domain-containing protein homolog (585 aa).

The region spanning 120 to 275 (LGFKGSCLLA…DKCARVLRDL (156 aa)) is the GST C-terminal domain.

It belongs to the GSTCD family.

In Drosophila melanogaster (Fruit fly), this protein is Glutathione S-transferase C-terminal domain-containing protein homolog.